The sequence spans 346 residues: Heterogeneous nuclear ribonucleoprotein A2 homolog 1 (346 aa).

2 RRM domains span residues 9–92 (RKLF…ESAK) and 100–179 (KKLF…LSKQ). Disordered regions lie at residues 182-217 (QDVQ…FRGG) and 326-346 (NYGP…RNRY). Over residues 193–217 (GNFGFGDSRGGGNFGSGPGGNFRGG) the composition is skewed to gly residues. Positions 297-340 (QQSSNYGPMKSGGNFGGNRSMGGGPYGGGNYGPGNASGGNGGGY) are nuclear targeting sequence.

The protein localises to the nucleus. Functionally, forms complexes (ribonucleosomes) with at least 20 other different hnRNP and heterogeneous nuclear RNA in the nucleus. In Xenopus laevis (African clawed frog), this protein is Heterogeneous nuclear ribonucleoprotein A2 homolog 1.